The primary structure comprises 393 residues: Formate-dependent phosphoribosylglycinamide formyltransferase (393 aa).

Residues 22 to 23 (EL) and Glu82 contribute to the N(1)-(5-phospho-beta-D-ribosyl)glycinamide site. Residues Arg114, Lys155, 160-165 (SSGHGQ), 195-198 (EGFV), and Glu203 each bind ATP. The region spanning 119–308 (RLAAEELGLP…EFALHARAIL (190 aa)) is the ATP-grasp domain. Glu267 and Glu279 together coordinate Mg(2+). Residues Asp286, Lys356, and 363 to 364 (RR) each bind N(1)-(5-phospho-beta-D-ribosyl)glycinamide.

Belongs to the PurK/PurT family. Homodimer.

The enzyme catalyses N(1)-(5-phospho-beta-D-ribosyl)glycinamide + formate + ATP = N(2)-formyl-N(1)-(5-phospho-beta-D-ribosyl)glycinamide + ADP + phosphate + H(+). It functions in the pathway purine metabolism; IMP biosynthesis via de novo pathway; N(2)-formyl-N(1)-(5-phospho-D-ribosyl)glycinamide from N(1)-(5-phospho-D-ribosyl)glycinamide (formate route): step 1/1. Involved in the de novo purine biosynthesis. Catalyzes the transfer of formate to 5-phospho-ribosyl-glycinamide (GAR), producing 5-phospho-ribosyl-N-formylglycinamide (FGAR). Formate is provided by PurU via hydrolysis of 10-formyl-tetrahydrofolate. The sequence is that of Formate-dependent phosphoribosylglycinamide formyltransferase from Mannheimia succiniciproducens (strain KCTC 0769BP / MBEL55E).